Here is a 179-residue protein sequence, read N- to C-terminus: Large ribosomal subunit protein uL5 (179 aa).

Belongs to the universal ribosomal protein uL5 family. In terms of assembly, part of the 50S ribosomal subunit; part of the 5S rRNA/L5/L18/L25 subcomplex. Contacts the 5S rRNA and the P site tRNA. Forms a bridge to the 30S subunit in the 70S ribosome.

This is one of the proteins that bind and probably mediate the attachment of the 5S RNA into the large ribosomal subunit, where it forms part of the central protuberance. In the 70S ribosome it contacts protein S13 of the 30S subunit (bridge B1b), connecting the 2 subunits; this bridge is implicated in subunit movement. Contacts the P site tRNA; the 5S rRNA and some of its associated proteins might help stabilize positioning of ribosome-bound tRNAs. The sequence is that of Large ribosomal subunit protein uL5 from Lachnoclostridium phytofermentans (strain ATCC 700394 / DSM 18823 / ISDg) (Clostridium phytofermentans).